Consider the following 358-residue polypeptide: Pseudouridylate synthase RPUSD4, mitochondrial (358 aa).

A mitochondrion-targeting transit peptide spans 1 to 12; sequence MRHAREVTFARL.

This sequence belongs to the pseudouridine synthase RluA family.

It is found in the mitochondrion matrix. The protein localises to the nucleus. The protein resides in the cytoplasm. It carries out the reaction uridine in 5S rRNA = pseudouridine in 5S rRNA. The enzyme catalyses a uridine in tRNA = a pseudouridine in tRNA. It catalyses the reaction a uridine in mRNA = a pseudouridine in mRNA. In terms of biological role, catalyzes uridine to pseudouridine isomerization (pseudouridylation) of different mitochondrial RNA substrates. Acts on position 1397 in 16S mitochondrial ribosomal RNA (16S mt-rRNA). This modification is required for the assembly of 16S mt-rRNA into a functional mitochondrial ribosome. Acts on position 39 in mitochondrial tRNA(Phe). Also catalyzes pseudouridylation of mRNAs in nucleus: acts as a regulator of pre-mRNA splicing by mediating pseudouridylation of pre-mRNAs at locations associated with alternatively spliced regions. Pseudouridylation of pre-mRNAs near splice sites directly regulates mRNA splicing and mRNA 3'-end processing. The polypeptide is Pseudouridylate synthase RPUSD4, mitochondrial (Danio rerio (Zebrafish)).